Consider the following 597-residue polypeptide: Protein kinase C-like 3 (597 aa).

The PB1 domain occupies 12 to 95; the sequence is DIKLKTRFHG…AELNIHVFVG (84 aa). Residues 127 to 177 form a Phorbol-ester/DAG-type zinc finger; the sequence is GHRFQGKRLNRRIQCFICHDYIWGIGRQGFRCVDCRLCVHKKCHRHVRTHC. The disordered stretch occupies residues 181–238; that stretch reads PQGPNVPVAPSSGVGSLRGGRLDTSSSTTRSGGGIDNGAFHEHEIESPGSAKDMSRST. In terms of domain architecture, Protein kinase spans 253-522; sequence FRLLTVIGRG…LNDMKEHDFF (270 aa). ATP is bound by residues 259 to 267 and Lys282; that span reads IGRGSYAKV. Asp377 acts as the Proton acceptor in catalysis. An AGC-kinase C-terminal domain is found at 524–595; it reads GFIDWEALEQ…VNPLQMSRED (72 aa).

The protein belongs to the protein kinase superfamily. AGC Ser/Thr protein kinase family. PKC subfamily. As to quaternary structure, interaction with par-3 required for the peripheral localization of par-6 and to form a par-3/par-6/pkc-3 complex, which is activated when cdc-42 interacts with par-6. Binds avidly to the phosphotyrosine interaction domain (PID) of a novel pkc-3 adapter protein num-1, which enables tethering and targeting of pkc-3 to the cell periphery. Requires Mg(2+) as cofactor.

The protein localises to the cytoplasm. The protein resides in the cytoskeleton. The catalysed reaction is L-seryl-[protein] + ATP = O-phospho-L-seryl-[protein] + ADP + H(+). It catalyses the reaction L-threonyl-[protein] + ATP = O-phospho-L-threonyl-[protein] + ADP + H(+). In terms of biological role, required for the normal progression of embryogenesis and viability of the organism. Plays an indispensable role in establishing embryonic polarity and in recruiting and maintaining par-6 to the periphery, through interaction with par-3. Required for epithelial cell polarity in the distal spermatheca. Phosphorylates serine residues of num-1. Required for the expression of antimicrobial peptide nlp-29 in response in response to fungal infection or physical injury. In Caenorhabditis briggsae, this protein is Protein kinase C-like 3.